Consider the following 323-residue polypeptide: Large ribosomal subunit protein uL10 (323 aa).

Positions Ala-298 to Phe-323 are disordered. Residues Glu-307–Phe-317 are compositionally biased toward acidic residues.

Belongs to the universal ribosomal protein uL10 family. P0 forms a pentameric complex by interaction with dimers of P1 and P2. In terms of processing, phosphorylated.

In terms of biological role, ribosomal protein P0 is the functional equivalent of E.coli protein L10. In Trypanosoma cruzi, this protein is Large ribosomal subunit protein uL10.